A 200-amino-acid chain; its full sequence is Guanylate kinase (200 aa).

The Guanylate kinase-like domain maps to 6–184 (GLLIVLSGPS…AVDKLKSILL (179 aa)). An ATP-binding site is contributed by 13 to 20 (GPSGAGKG).

The protein belongs to the guanylate kinase family.

The protein localises to the cytoplasm. The enzyme catalyses GMP + ATP = GDP + ADP. Essential for recycling GMP and indirectly, cGMP. This Desulfitobacterium hafniense (strain Y51) protein is Guanylate kinase.